Consider the following 351-residue polypeptide: Protein RecA (351 aa).

ATP is bound at residue 67-74 (GPESSGKT).

Belongs to the RecA family.

The protein localises to the cytoplasm. Can catalyze the hydrolysis of ATP in the presence of single-stranded DNA, the ATP-dependent uptake of single-stranded DNA by duplex DNA, and the ATP-dependent hybridization of homologous single-stranded DNAs. It interacts with LexA causing its activation and leading to its autocatalytic cleavage. This is Protein RecA from Arthrobacter sp. (strain FB24).